The primary structure comprises 505 residues: DDB1- and CUL4-associated factor 17 (505 aa).

2 helical membrane passes run 186 to 206 and 222 to 242; these read VLLY…ILEI and GILI…QAII.

As to quaternary structure, interacts with DDB1, CUL4A and CUL4B.

The protein resides in the membrane. It localises to the nucleus. It is found in the nucleolus. It functions in the pathway protein modification; protein ubiquitination. Functionally, may function as a substrate receptor for CUL4-DDB1 E3 ubiquitin-protein ligase complex. This chain is DDB1- and CUL4-associated factor 17 (Dcaf17), found in Rattus norvegicus (Rat).